Reading from the N-terminus, the 492-residue chain is Cell division protein FtsA (492 aa).

Disordered regions lie at residues 288–307 and 429–458; these read GEETPSQNVQIPTTGSDGHE and YTRTAHQSSPTPHIHSSPTERNLSDLKAPS. Polar residues predominate over residues 291-303; it reads TPSQNVQIPTTGS. Residues 436-447 show a composition bias toward low complexity; sequence SSPTPHIHSSPT.

This sequence belongs to the FtsA/MreB family. In terms of assembly, self-interacts. Interacts with FtsZ.

It localises to the cell inner membrane. Functionally, cell division protein that is involved in the assembly of the Z ring. May serve as a membrane anchor for the Z ring. The protein is Cell division protein FtsA of Helicobacter pylori (strain ATCC 700392 / 26695) (Campylobacter pylori).